Reading from the N-terminus, the 354-residue chain is uncharacterized protein (354 aa).

The protein belongs to the band 7/mec-2 family.

Its subcellular location is the mitochondrion. This is an uncharacterized protein from Schizosaccharomyces pombe (strain 972 / ATCC 24843) (Fission yeast).